Here is a 197-residue protein sequence, read N- to C-terminus: Putative eggshell protein (197 aa).

A signal peptide spans Met-1–Ala-17.

This Fasciola hepatica (Liver fluke) protein is Putative eggshell protein.